We begin with the raw amino-acid sequence, 229 residues long: Large ribosomal subunit protein uL1 (229 aa).

The protein belongs to the universal ribosomal protein uL1 family. In terms of assembly, part of the 50S ribosomal subunit.

In terms of biological role, binds directly to 23S rRNA. The L1 stalk is quite mobile in the ribosome, and is involved in E site tRNA release. Its function is as follows. Protein L1 is also a translational repressor protein, it controls the translation of the L11 operon by binding to its mRNA. This chain is Large ribosomal subunit protein uL1, found in Lactococcus lactis subsp. cremoris (strain MG1363).